The sequence spans 400 residues: uncharacterized protein (400 aa).

A TR mART core domain is found at 161 to 380 (NDLLNIIDIV…YVVKVIVMRL (220 aa)).

This is an uncharacterized protein from Acanthamoeba polyphaga (Amoeba).